Reading from the N-terminus, the 478-residue chain is 3-isopropylmalate dehydratase large subunit (478 aa).

[4Fe-4S] cluster-binding residues include Cys347, Cys407, and Cys410.

It belongs to the aconitase/IPM isomerase family. LeuC type 1 subfamily. In terms of assembly, heterodimer of LeuC and LeuD. The cofactor is [4Fe-4S] cluster.

It carries out the reaction (2R,3S)-3-isopropylmalate = (2S)-2-isopropylmalate. It functions in the pathway amino-acid biosynthesis; L-leucine biosynthesis; L-leucine from 3-methyl-2-oxobutanoate: step 2/4. Catalyzes the isomerization between 2-isopropylmalate and 3-isopropylmalate, via the formation of 2-isopropylmaleate. This chain is 3-isopropylmalate dehydratase large subunit, found in Prochlorococcus marinus (strain MIT 9303).